Reading from the N-terminus, the 95-residue chain is ATP-dependent Clp protease adapter protein ClpS (95 aa).

This sequence belongs to the ClpS family. Binds to the N-terminal domain of the chaperone ClpA.

In terms of biological role, involved in the modulation of the specificity of the ClpAP-mediated ATP-dependent protein degradation. The protein is ATP-dependent Clp protease adapter protein ClpS of Synechococcus elongatus (strain ATCC 33912 / PCC 7942 / FACHB-805) (Anacystis nidulans R2).